A 513-amino-acid chain; its full sequence is t-SNARE domain-containing protein 1 (513 aa).

Disordered regions lie at residues 1–23 and 49–128; these read MSYG…GPSR and ESKL…KPNF. The span at 7 to 19 shows a compositional bias: gly residues; that stretch reads ARGGGLGSRGPFG. A Phosphoserine modification is found at serine 378. A t-SNARE coiled-coil homology domain is found at 416 to 478; sequence LEAIRLREEA…EAARQLLAGA (63 aa). Residues 491–511 form a helical membrane-spanning segment; sequence CFLSAGVTALLVIIIIIATSV.

It is found in the membrane. The protein is t-SNARE domain-containing protein 1 (TSNARE1) of Homo sapiens (Human).